Consider the following 122-residue polypeptide: Large ribosomal subunit protein uL14c (122 aa).

This sequence belongs to the universal ribosomal protein uL14 family. Part of the 50S ribosomal subunit.

The protein resides in the plastid. Its subcellular location is the chloroplast. In terms of biological role, binds to 23S rRNA. This Eucalyptus globulus subsp. globulus (Tasmanian blue gum) protein is Large ribosomal subunit protein uL14c.